A 333-amino-acid polypeptide reads, in one-letter code: Transcription factor TGA2.2 (333 aa).

Residues 1 to 14 (MADASSRTDTSTVL) show a composition bias toward polar residues. The segment at 1 to 48 (MADASSRTDTSTVLDTDDKNQMVDGQSGAIVPSNSSDRSDRSDKPMDQ) is disordered. Positions 37 to 48 (DRSDRSDKPMDQ) are enriched in basic and acidic residues. Positions 47–91 (DQKVLRRLAQNREAARKSRLRKKAYVQQLESSKLKLASLEQEINK) constitute a bZIP domain. The segment at 49–69 (KVLRRLAQNREAARKSRLRKK) is basic motif. The leucine-zipper stretch occupies residues 75–89 (LESSKLKLASLEQEI). The DOG1 domain occupies 114–330 (AMTFDLEYAR…RALSSLWLAR (217 aa)).

Belongs to the bZIP family. In terms of assembly, interacts with NPR1/NH1. Interacts with NPR3/NH3.

The protein resides in the nucleus. In terms of biological role, transcriptional regulator involved in defense response. This Oryza sativa subsp. japonica (Rice) protein is Transcription factor TGA2.2.